Consider the following 285-residue polypeptide: Nucleotide-binding protein GSU1884 (285 aa).

8–15 lines the ATP pocket; that stretch reads GLSGSGKS. 59–62 serves as a coordination point for GTP; the sequence is DIRG.

Belongs to the RapZ-like family.

Displays ATPase and GTPase activities. The polypeptide is Nucleotide-binding protein GSU1884 (Geobacter sulfurreducens (strain ATCC 51573 / DSM 12127 / PCA)).